The chain runs to 527 residues: MSTDDWRENAKRPIRRALISVYDKTGLVELAQGLTEAGVEIVSTGSTAKVIAEKGIPVTRVEVLTGFPEVLDGRVKTLHPRVHAGLLADLRKPEHAAALEQLGIAAFELVVVNLYPFTETVDSGAGIDECVEQIDIGGPSMVRAAAKNHPSVAVVVDPLGYDGVLAAVRHGGFTLAERKRLAALAFQHTADYDIAVATWMESTLAPEHPPTTFPKWLGRSWRRSAMLRYGENPHQQASLYSDPGAWPGLAQAEQLHGKEMSYNNFTDADAAWRAAFDHEQTCVAIIKHANPCGIAISSISVADAHRKAHECDPLSAFGGVIAANTEVSVEMAEYVSTIFTEVIIAPAYQPAALEILTRKKNIRVLVASEPLTGGTELRPISGGLLVQQRDELDAHGDNPANWTLATGAPADPATLADLVFAWRVCRAVKSNAIVIAAGGATIGVGMGQVNRVDAARLAVERGGDRVRGAVAASDAFFPFPDGLETLTGAGVKAVVHPGGSVRDDEVTAAAANAGITLYLTGARHFAH.

The 148-residue stretch at 9-156 (NAKRPIRRAL…KNHPSVAVVV (148 aa)) folds into the MGS-like domain.

The protein belongs to the PurH family.

The catalysed reaction is (6R)-10-formyltetrahydrofolate + 5-amino-1-(5-phospho-beta-D-ribosyl)imidazole-4-carboxamide = 5-formamido-1-(5-phospho-D-ribosyl)imidazole-4-carboxamide + (6S)-5,6,7,8-tetrahydrofolate. It carries out the reaction IMP + H2O = 5-formamido-1-(5-phospho-D-ribosyl)imidazole-4-carboxamide. It participates in purine metabolism; IMP biosynthesis via de novo pathway; 5-formamido-1-(5-phospho-D-ribosyl)imidazole-4-carboxamide from 5-amino-1-(5-phospho-D-ribosyl)imidazole-4-carboxamide (10-formyl THF route): step 1/1. It functions in the pathway purine metabolism; IMP biosynthesis via de novo pathway; IMP from 5-formamido-1-(5-phospho-D-ribosyl)imidazole-4-carboxamide: step 1/1. The sequence is that of Bifunctional purine biosynthesis protein PurH from Mycolicibacterium paratuberculosis (strain ATCC BAA-968 / K-10) (Mycobacterium paratuberculosis).